We begin with the raw amino-acid sequence, 517 residues long: Putative transporter C543.05c (517 aa).

11 consecutive transmembrane segments (helical) span residues 68–88 (SFGVNEVLLASVLGSVVFALL), 93–113 (LCIVGVTGPITVFNYTVYDIM), 121–141 (FPFLCWICLWSMIFHFIIAIA), 155–175 (CEIFGLYVAFIYLEKGVQVLC), 186–206 (FLSITIALLFLMVGWLCDTVG), 217–237 (ILLLDYGLVASIIFFSGFQHI), 269–289 (IPVGDVFLAIPFSIVLTILFY), 311–331 (GFHWDFFLLGITTGVSGILGI), 377–397 (SNFIQGLMTVGTMTGPLLLVL), 403–423 (CVLAGLFWVMGFSAIFGNGIT), and 449–471 (RVVWLYTILQLIGFGATFAITQV).

The protein belongs to the anion exchanger (TC 2.A.31) family.

It localises to the vacuole membrane. The polypeptide is Putative transporter C543.05c (Schizosaccharomyces pombe (strain 972 / ATCC 24843) (Fission yeast)).